Consider the following 90-residue polypeptide: Acylphosphatase (90 aa).

The Acylphosphatase-like domain maps to 3-89 (ALKIRVEGIV…EGYEDFTIKY (87 aa)). Active-site residues include arginine 18 and asparagine 36.

This sequence belongs to the acylphosphatase family.

The catalysed reaction is an acyl phosphate + H2O = a carboxylate + phosphate + H(+). This chain is Acylphosphatase (acyP), found in Thermotoga maritima (strain ATCC 43589 / DSM 3109 / JCM 10099 / NBRC 100826 / MSB8).